A 157-amino-acid chain; its full sequence is uncharacterized protein (157 aa).

An N-terminal signal peptide occupies residues 1–23 (MEALRRAHEATLRLLLCRPWASG).

The protein localises to the secreted. This is an uncharacterized protein from Mus musculus (Mouse).